The primary structure comprises 282 residues: NADPH-dependent 7-cyano-7-deazaguanine reductase (282 aa).

88 to 90 (IES) serves as a coordination point for substrate. An NADPH-binding site is contributed by 90 to 91 (SK). Catalysis depends on cysteine 190, which acts as the Thioimide intermediate. Aspartate 197 functions as the Proton donor in the catalytic mechanism. 229–230 (HE) is a binding site for substrate. 258 to 259 (RG) contributes to the NADPH binding site.

The protein belongs to the GTP cyclohydrolase I family. QueF type 2 subfamily. As to quaternary structure, homodimer.

It localises to the cytoplasm. It catalyses the reaction 7-aminomethyl-7-carbaguanine + 2 NADP(+) = 7-cyano-7-deazaguanine + 2 NADPH + 3 H(+). It participates in tRNA modification; tRNA-queuosine biosynthesis. Functionally, catalyzes the NADPH-dependent reduction of 7-cyano-7-deazaguanine (preQ0) to 7-aminomethyl-7-deazaguanine (preQ1). This chain is NADPH-dependent 7-cyano-7-deazaguanine reductase, found in Escherichia coli O139:H28 (strain E24377A / ETEC).